Reading from the N-terminus, the 966-residue chain is MEPQVTLNVTFKNEIQSFLVSDPENTTWADIEAMVKVSFDLNTIQIKYLDEENEEVSINSQGEYEEALKMAVKQGNQLQMQVHEGHHVVDEAPPPVVGAKRLAARAGKKPLAHYSSLVRVLGSDMKTPEDPAVQSFPLVPCDTDQPQDKPPDWFTSYLETFREQVVNETVEKLEQKLHEKLVLQNPSLGSCPSEVSMPTSEETLFLPENQFSWHIACNNCQRRIVGVRYQCSLCPSYNICEDCEAGPYGHDTNHVLLKLRRPVVGSSEPFCHSKYSTPRLPAALEQVRLQKQVDKNFLKAEKQRLRAEKKQRKAEVKELKKQLKLHRKIHLWNSIHGLQSPKSPLGRPESLLQSNTLMLPLQPCTSVMPMLSAAFVDENLPDGTHLQPGTKFIKHWRMKNTGNVKWSADTKLKFMWGNLTLASTEKKDVLVPCLKAGHVGVVSVEFIAPALEGTYTSHWRLSHKGQQFGPRVWCSIIVDPFPSEESPDNIEKGMISSSKTDDLTCQQEETFLLAKEERQLGEVTEQTEGTAACIPQKAKNVASERELYIPSVDLLTAQDLLSFELLDINIVQELERVPHNTPVDVTPCMSPLPHDSPLIEKPGLGQIEEENEGAGFKALPDSMVSVKRKAENIASVEEAEEDLSGTQFVCETVIRSLTLDAAPDHNPPCRQKSLQMTFALPEGPLGNEKEEIIHIAEEEAVMEEEEDEEDEEEEDELKDEVQSQSSASSEDYIIILPECFDTSRPLGDSMYSSALSQPGLERGAEGKPGVEAGQEPAEAGERLPGGENQPQEHSISDILTTSQTLETVPLIPEVVELPPSLPRSSPCVHHHGSPGVDLPVTIPEVSSVPDQIRGEPRGSSGLVNSRQKSYDHSRHHHGSSIAGGLVKGALSVAASAYKALFAGPPVTAQPIISEDQTAALMAHLFEMGFCDRQLNLRLLKKHNYNILQVVTELLQLNNNDWYSQRY.

Residues 4 to 85 form the PB1 domain; the sequence is QVTLNVTFKN…NQLQMQVHEG (82 aa). At Ser-116 the chain carries Phosphoserine. Residues 212-264 form a ZZ-type zinc finger; sequence SWHIACNNCQRRIVGVRYQCSLCPSYNICEDCEAGPYGHDTNHVLLKLRRPVV. Zn(2+) contacts are provided by Cys-217, Cys-220, Cys-231, Cys-234, Cys-240, Cys-243, His-250, and His-254. An ATG8 family protein-binding region spans residues 542–636; it reads ASERELYIPS…KRKAENIASV (95 aa). Thr-586 is modified (phosphothreonine; by GSK3-alpha). Phosphoserine is present on residues Ser-590, Ser-596, and Ser-625. Over residues 699–718 the composition is skewed to acidic residues; it reads EAVMEEEEDEEDEEEEDELK. 3 disordered regions span residues 699–728, 750–792, and 848–879; these read EAVM…SSAS, MYSS…QPQE, and VPDQ…HHGS. Positions 727–738 are ATG8 family protein-binding; it reads ASSEDYIIILPE. The UBA domain occupies 913 to 957; the sequence is SEDQTAALMAHLFEMGFCDRQLNLRLLKKHNYNILQVVTELLQLN.

As to quaternary structure, homooligomer and heterooligomer. Interacts with TRIM55. Interacts with titin/TTN. Interacts with RNF29, USP8, MAP1LC3A, MAP1LC3B, MAP1LC3C, GABARAP, GABARAPL1 and GABARAPL2. Binds to ubiquitin and ubiquitinated proteins. Interacts with SQSTM1. Interacts with TAX1BP1. Interacts with IRF3; this interaction mediates autophagic degradation of IRF3. Interacts with IL12A and IL12B. (Microbial infection) Interacts with Influenza A virus protein PB1; this interaction promotes NBR1-mediated selective autophagic degradation of MAVS. Post-translationally, (Microbial infection) Cleaved by S.pyogenes SpeB protease; leading to its degradation. Degradation by SpeB prevents autophagy, promoting to S.pyogenes intracellular replication. Phosphorylated by GSK3A; this phosphorylation inhibits NBR1 involvement in the formation of ubiquitinated protein aggregates.

It is found in the cytoplasm. Its subcellular location is the cytoplasmic vesicle. The protein resides in the autophagosome. The protein localises to the lysosome. It localises to the myofibril. It is found in the sarcomere. Its subcellular location is the m line. Functionally, ubiquitin-binding autophagy adapter that participates in different processes including host defense or intracellular homeostasis. Possesses a double function during the selective autophagy by acting as a shuttle bringing ubiquitinated proteins to autophagosomes and also by participating in the formation of protein aggregates. Plays a role in the regulation of the innate immune response by modulating type I interferon production and targeting ubiquitinated IRF3 for autophagic degradation. In response to oxidative stress, promotes an increase in SQSTM1 levels, phosphorylation, and body formation by preventing its autophagic degradation. In turn, activates the KEAP1-NRF2/NFE2L2 antioxidant pathway. Also plays non-autophagy role by mediating the shuttle of IL-12 to late endosome for subsequent secretion. In Homo sapiens (Human), this protein is Next to BRCA1 gene 1 protein (NBR1).